The primary structure comprises 299 residues: ATP phosphoribosyltransferase (299 aa).

The protein belongs to the ATP phosphoribosyltransferase family. Long subfamily. The cofactor is Mg(2+).

It is found in the cytoplasm. It catalyses the reaction 1-(5-phospho-beta-D-ribosyl)-ATP + diphosphate = 5-phospho-alpha-D-ribose 1-diphosphate + ATP. The protein operates within amino-acid biosynthesis; L-histidine biosynthesis; L-histidine from 5-phospho-alpha-D-ribose 1-diphosphate: step 1/9. Its activity is regulated as follows. Feedback inhibited by histidine. Functionally, catalyzes the condensation of ATP and 5-phosphoribose 1-diphosphate to form N'-(5'-phosphoribosyl)-ATP (PR-ATP). Has a crucial role in the pathway because the rate of histidine biosynthesis seems to be controlled primarily by regulation of HisG enzymatic activity. The protein is ATP phosphoribosyltransferase of Shewanella pealeana (strain ATCC 700345 / ANG-SQ1).